The sequence spans 116 residues: U16-barytoxin-Tl1a (116 aa).

The signal sequence occupies residues 1–20 (MKTIIVFLSLLVLATKFGDA). Residues 21 to 74 (KEGVNQEQKKEVTQNEFRVEYLNEMAAMSLLQQLEAIESALFEKEAGRNSRQKR) constitute a propeptide that is removed on maturation. Cystine bridges form between C75/C90, C82/C95, and C89/C110.

The protein belongs to the neurotoxin 14 (magi-1) family. 06 (ICK-Trit) subfamily. Expressed by the venom gland.

It is found in the secreted. Functionally, ion channel inhibitor. In Trittame loki (Brush-footed trapdoor spider), this protein is U16-barytoxin-Tl1a.